A 309-amino-acid polypeptide reads, in one-letter code: Small ribosomal subunit biogenesis GTPase RsgA (309 aa).

Positions 64-225 (ENELVRPPLA…VADTPGFSTY (162 aa)) constitute a CP-type G domain. GTP-binding positions include 113–116 (SKTD) and 168–176 (GQTGAGKST). Residues Cys249, Cys254, His256, and Cys262 each coordinate Zn(2+).

The protein belongs to the TRAFAC class YlqF/YawG GTPase family. RsgA subfamily. In terms of assembly, monomer. Associates with 30S ribosomal subunit, binds 16S rRNA. It depends on Zn(2+) as a cofactor.

The protein resides in the cytoplasm. Its function is as follows. One of several proteins that assist in the late maturation steps of the functional core of the 30S ribosomal subunit. Helps release RbfA from mature subunits. May play a role in the assembly of ribosomal proteins into the subunit. Circularly permuted GTPase that catalyzes slow GTP hydrolysis, GTPase activity is stimulated by the 30S ribosomal subunit. This Pediococcus pentosaceus (strain ATCC 25745 / CCUG 21536 / LMG 10740 / 183-1w) protein is Small ribosomal subunit biogenesis GTPase RsgA.